Consider the following 1033-residue polypeptide: SIT4-associating protein SAP190 (1033 aa).

Disordered stretches follow at residues 32–82, 147–213, 768–813, and 828–1033; these read DQDD…TTES, PEII…QVET, FGND…HDSG, and ENEE…KEAF. Residues 158–170 show a composition bias toward basic and acidic residues; the sequence is ILIERDRKDKKED. Positions 171 to 182 are enriched in acidic residues; it reads AEEGGDSEETTN. Positions 183–195 are enriched in basic and acidic residues; sequence DSDHDSGDERSVD. A Phosphoserine modification is found at S774. Composition is skewed to acidic residues over residues 784–793 and 828–838; these read SEDIIGDTEG and ENEEDYAEYSD. A phosphoserine mark is found at S857, S862, and S892. The span at 858-879 shows a compositional bias: basic and acidic residues; that stretch reads DDGKSKSAESEFTDKISEHRDG. Residues 909 to 924 are compositionally biased toward polar residues; sequence SRSQPSDPKLQDQNIF. The segment covering 932–944 has biased composition (acidic residues); that stretch reads GVGDDDDYMDPND. Residue T990 is modified to Phosphothreonine. Phosphoserine is present on S991. Residues 1000–1018 show a composition bias toward acidic residues; the sequence is ISSDEEDSEDEDEENDMGN.

It belongs to the SAPS family. Associates with the SIT4 protein phosphatase catalytic subunit in a cell-cycle-dependent manner. Hyperphosphorylated in the absence of SIT4.

The protein resides in the cytoplasm. Functionally, positive regulator of protein phosphatase SIT4. Involved in the general amino acid control (GAAC) response regulated by TOR. Involved in the dephosphorylation of the elongator complex subunit IKI3. The polypeptide is SIT4-associating protein SAP190 (SAP190) (Saccharomyces cerevisiae (strain AWRI1631) (Baker's yeast)).